A 476-amino-acid chain; its full sequence is PRAME family member 5 (476 aa).

Residues 97-124 (RWKLQVLDLQDVCENFWMVWSEAMAHGC) form an LRR 1; degenerate repeat. The stretch at 179 to 203 (HLCCKKLKILGMPFRNIRSILKMVN) is one LRR 2; degenerate repeat. The LRR 3; degenerate repeat unit spans residues 204–230 (LDCIQEVEVNCKWVLPILTQFTPYLGH). Residues 231–266 (MRNLQKLVLSHMDVSRYVSPEQKKEIVTQFTTQFLK) form an LRR 4; degenerate repeat. LRR repeat units follow at residues 267–292 (LCCLQKLSMNSVSFLEGHLDQLLSCL), 293–324 (KTSLKVLTITNCVLLESDLKHLSQCPSISQLK), 325–345 (TLDLSGIRLTNYSLVPLQILL), 349–376 (AATLEYLDLDDCGIIDSQVNAILPALSR), and 377–401 (CFELNTFSFCGNPISMATLENLLSH).

This sequence belongs to the PRAME family.

The chain is PRAME family member 5 from Homo sapiens (Human).